The sequence spans 204 residues: Inactive ribonuclease-like protein 9 (204 aa).

A signal peptide spans 1–26 (MMRTPITTHPLLLLLLLQQLLQPVQF). Intrachain disulfides connect Cys97–Cys152, Cys115–Cys167, and Cys122–Cys129. 2 N-linked (GlcNAc...) asparagine glycosylation sites follow: Asn130 and Asn142.

It belongs to the pancreatic ribonuclease family.

It is found in the secreted. Does not exhibit any ribonuclease activity. The protein is Inactive ribonuclease-like protein 9 (RNASE9) of Macaca nemestrina (Pig-tailed macaque).